A 383-amino-acid chain; its full sequence is Adaptive-response sensory kinase SasA (383 aa).

The Histidine kinase domain occupies M152–Q365. H155 carries the post-translational modification Phosphohistidine; by autocatalysis.

Homooligomerizes. Interacts with KaiC. Participates in the KaiABC clock complex, whose core is composed of a KaiC homohexamer, 6 KaiB and up to 6 KaiA dimers. SasA and KaiB(fs) compete to bind to KaiC.

The enzyme catalyses ATP + protein L-histidine = ADP + protein N-phospho-L-histidine.. Member of the two-component regulatory system SasA/RpaA involved in genome-wide circadian gene expression. One of several clock output pathways. Participates in the Kai clock protein complex, the main circadian regulator in cyanobacteria, via its interaction with KaiC. KaiC enhances the autophosphorylation activity of SasA, which then transfers its phosphate group to RpaA to activate it. In addition to its output function, recruits fold-shifted KaiB (KaiB(fs)) to KaiC to cooperatively form the KaiB(6):KaiC(6) complex (independent of SasA kinase activity). Required for robustness of the circadian rhythm of gene expression and is involved in clock output, also required for adaptation to light/dark cycles. In Synechococcus sp. (strain CC9902), this protein is Adaptive-response sensory kinase SasA.